A 377-amino-acid chain; its full sequence is Chaperone protein DnaJ (377 aa).

The J domain maps to 5–70 (DYYEVLGVGK…EKKAAYDQYG (66 aa)). The segment at 137–215 (GHEAQIRVPH…CHGQGKLKSQ (79 aa)) adopts a CR-type zinc-finger fold. Positions 150, 153, 167, 170, 189, 192, 203, and 206 each coordinate Zn(2+). CXXCXGXG motif repeat units lie at residues 150–157 (CDHCHGNG), 167–174 (CPTCHGAG), 189–196 (CPKCHGSG), and 203–210 (CTKCHGQG).

It belongs to the DnaJ family. Homodimer. Zn(2+) is required as a cofactor.

It localises to the cytoplasm. Its function is as follows. Participates actively in the response to hyperosmotic and heat shock by preventing the aggregation of stress-denatured proteins and by disaggregating proteins, also in an autonomous, DnaK-independent fashion. Unfolded proteins bind initially to DnaJ; upon interaction with the DnaJ-bound protein, DnaK hydrolyzes its bound ATP, resulting in the formation of a stable complex. GrpE releases ADP from DnaK; ATP binding to DnaK triggers the release of the substrate protein, thus completing the reaction cycle. Several rounds of ATP-dependent interactions between DnaJ, DnaK and GrpE are required for fully efficient folding. Also involved, together with DnaK and GrpE, in the DNA replication of plasmids through activation of initiation proteins. This is Chaperone protein DnaJ from Cupriavidus taiwanensis (strain DSM 17343 / BCRC 17206 / CCUG 44338 / CIP 107171 / LMG 19424 / R1) (Ralstonia taiwanensis (strain LMG 19424)).